Reading from the N-terminus, the 105-residue chain is UPF0145 protein Aflv_1588 (105 aa).

The protein belongs to the UPF0145 family.

The chain is UPF0145 protein Aflv_1588 from Anoxybacillus flavithermus (strain DSM 21510 / WK1).